We begin with the raw amino-acid sequence, 253 residues long: MASLTKMHSKGLDFFYGDFQALHDISLEFSNNQVTALIGPSGCGKSTFLRCLNRMNDLIPISRVEGEICLDNDNIYDPQVDVVELRRRVGMVFQKPNPFPKSIYENVAYGLRVNGVKDKNCLEDKVEESLRHAALWDEVKDRLHDSALGLSGGQQQRLCIARALAVEPEVLLMDEPASALDPIATQKIEELIHTLKQKYTIIIVTHSMQQAARVSDVTAFFYMGRLIETGDTEVMFTRPGNKQTEDYITGRFG.

The ABC transporter domain occupies 7–248 (MHSKGLDFFY…PGNKQTEDYI (242 aa)). Residue 39 to 46 (GPSGCGKS) participates in ATP binding.

The protein belongs to the ABC transporter superfamily. Phosphate importer (TC 3.A.1.7) family. In terms of assembly, the complex is composed of two ATP-binding proteins (PstB), two transmembrane proteins (PstC and PstA) and a solute-binding protein (PstS).

It is found in the cell inner membrane. It catalyses the reaction phosphate(out) + ATP + H2O = ADP + 2 phosphate(in) + H(+). Part of the ABC transporter complex PstSACB involved in phosphate import. Responsible for energy coupling to the transport system. The protein is Phosphate import ATP-binding protein PstB of Oleidesulfovibrio alaskensis (strain ATCC BAA-1058 / DSM 17464 / G20) (Desulfovibrio alaskensis).